The sequence spans 379 residues: MIISASTDYRAAAQRRLPPFLFHYIDGGAYAEHTLKRNVSDLSDIALRQRVLRNMSDLSLETELFGETLAMPVALAPVGLTGMYARRGEVQAARAADSRGIPFTLSTVSVCPIEEVAPAIQRPMWFQLYVLRDRGFMRNALERAQAAGVTTLVFTVDMPVPGARYRDAHSGMSGPNASLRRIGQAITHPHWAWDVGLFGRPHDLGNISTYRGNPTGLEDYIGWLGSNFDPSISWKDLEWIREFWKGPMVIKGILDPDDARDAVKFGADGIVVSNHGGRQLDGVLSTARALPAIADAVQGDLKILADSGIRTGLDVVRMLALGADTVLLGRAFVYALAAQGEAGVANLLDLIAKEMRVAMTLTGARRIADIGRDSLVNLP.

An FMN hydroxy acid dehydrogenase domain is found at Met1–Pro379. Tyr24 is a binding site for substrate. Positions 106 and 127 each coordinate FMN. Residue Tyr129 coordinates substrate. Thr155 serves as a coordination point for FMN. Arg164 serves as a coordination point for substrate. An FMN-binding site is contributed by Lys251. The active-site Proton acceptor is His275. Residue Arg278 coordinates substrate. FMN is bound at residue Asp306–Arg330.

It belongs to the FMN-dependent alpha-hydroxy acid dehydrogenase family. Requires FMN as cofactor.

It is found in the cell inner membrane. It carries out the reaction (S)-lactate + A = pyruvate + AH2. Functionally, catalyzes the conversion of L-lactate to pyruvate. Is coupled to the respiratory chain. The protein is L-lactate dehydrogenase of Stenotrophomonas maltophilia (strain R551-3).